A 164-amino-acid polypeptide reads, in one-letter code: General odorant-binding protein 1 (164 aa).

Positions 1-18 are cleaved as a signal peptide; that stretch reads MWKLVVVLTVNLLQGALT. 3 disulfide bridges follow: Cys-37/Cys-72, Cys-68/Cys-126, and Cys-115/Cys-135.

Belongs to the PBP/GOBP family. Homodimer. Antenna.

Present in the aqueous fluid surrounding olfactory sensory dendrites and are thought to aid in the capture and transport of hydrophobic odorants into and through this fluid. This chain is General odorant-binding protein 1, found in Bombyx mori (Silk moth).